Here is a 74-residue protein sequence, read N- to C-terminus: Sec-independent protein translocase protein TatA (74 aa).

A helical membrane pass occupies residues 1 to 21 (MGSIGMTELLLIFGIIVLLFG).

This sequence belongs to the TatA/E family. In terms of assembly, forms a complex with TatC.

Its subcellular location is the cell inner membrane. In terms of biological role, part of the twin-arginine translocation (Tat) system that transports large folded proteins containing a characteristic twin-arginine motif in their signal peptide across membranes. TatA could form the protein-conducting channel of the Tat system. The chain is Sec-independent protein translocase protein TatA from Sulfurihydrogenibium sp. (strain YO3AOP1).